A 310-amino-acid chain; its full sequence is ADP-L-glycero-D-manno-heptose-6-epimerase (310 aa).

NADP(+)-binding positions include 10–11, 31–32, Lys38, Lys53, 75–79, and Asn92; these read FI, DN, and EGACS. Tyr140 acts as the Proton acceptor in catalysis. Residue Lys144 participates in NADP(+) binding. A substrate-binding site is contributed by Asn169. Positions 170 and 178 each coordinate NADP(+). The active-site Proton acceptor is Lys178. Residues Ser180, His187, 201–204, and Arg209 each bind substrate; that span reads FEGS. Lys267 is subject to N6-acetyllysine. Tyr272 lines the substrate pocket.

It belongs to the NAD(P)-dependent epimerase/dehydratase family. HldD subfamily. In terms of assembly, homopentamer. NADP(+) serves as cofactor.

The enzyme catalyses ADP-D-glycero-beta-D-manno-heptose = ADP-L-glycero-beta-D-manno-heptose. It participates in nucleotide-sugar biosynthesis; ADP-L-glycero-beta-D-manno-heptose biosynthesis; ADP-L-glycero-beta-D-manno-heptose from D-glycero-beta-D-manno-heptose 7-phosphate: step 4/4. Catalyzes the interconversion between ADP-D-glycero-beta-D-manno-heptose and ADP-L-glycero-beta-D-manno-heptose via an epimerization at carbon 6 of the heptose. The polypeptide is ADP-L-glycero-D-manno-heptose-6-epimerase (Shigella boydii serotype 18 (strain CDC 3083-94 / BS512)).